The sequence spans 466 residues: SVGFKAGVKDYKLTYYTPDYETKDTDILAAFRVTPQPGVPPEEAGAAVAVESSTGTWTTVWTDGLTSLDRYKGRCYHIEPVAGEETQFIAYVAYPLDLFEEGSVXNMFTSIVGNVFGFKALRALRLEDLRIPVAYVKTFQGPPHAIQVERDKLNKYGRPLLGCTIKPKLGLSAKNYGRAVYECLRGGLDFTKDDENVNSQPFMRWRDRFLFCAEAIYKAQAETGEIKGHYLNATAGTCEEMIKRAVFARELGVPIVMHDYLTGGFTANTSLAHYCRDNGLLLHIHRAMHAVIDRQKNHGIHFRVLAKALRMSGGDHIHSGTVVGKLEGEREITLGFVDLLRDDFIEKDRSRGIYFTQDWVSLPGVLPVASGGIHVWHMPALTEIFGDDSVLQFGGGTLGHPWXKAPGAVAXRVALEACVQARNEGRDLAREGNEIIREASKWSPELAAACEVWKEIKFEFEAMDTL.

Lys-5 bears the N6,N6,N6-trimethyllysine mark. Residues Asn-114 and Thr-164 each coordinate substrate. Lys-166 (proton acceptor) is an active-site residue. Lys-168 is a binding site for substrate. Mg(2+) contacts are provided by Lys-192, Asp-194, and Glu-195. Lys-192 is modified (N6-carboxylysine). Catalysis depends on His-285, which acts as the Proton acceptor. Positions 286, 318, and 370 each coordinate substrate.

This sequence belongs to the RuBisCO large chain family. Type I subfamily. Heterohexadecamer of 8 large chains and 8 small chains; disulfide-linked. The disulfide link is formed within the large subunit homodimers. It depends on Mg(2+) as a cofactor. Post-translationally, the disulfide bond which can form in the large chain dimeric partners within the hexadecamer appears to be associated with oxidative stress and protein turnover.

The protein localises to the plastid. The protein resides in the chloroplast. The catalysed reaction is 2 (2R)-3-phosphoglycerate + 2 H(+) = D-ribulose 1,5-bisphosphate + CO2 + H2O. It carries out the reaction D-ribulose 1,5-bisphosphate + O2 = 2-phosphoglycolate + (2R)-3-phosphoglycerate + 2 H(+). Its function is as follows. RuBisCO catalyzes two reactions: the carboxylation of D-ribulose 1,5-bisphosphate, the primary event in carbon dioxide fixation, as well as the oxidative fragmentation of the pentose substrate in the photorespiration process. Both reactions occur simultaneously and in competition at the same active site. The polypeptide is Ribulose bisphosphate carboxylase large chain (Cercidiphyllum japonicum (Katsura tree)).